The sequence spans 219 residues: tRNA (guanine-N(7)-)-methyltransferase (219 aa).

S-adenosyl-L-methionine is bound by residues glutamate 44, aspartate 69, glutamate 102, and asparagine 125. 2 residues coordinate substrate: lysine 129 and aspartate 161.

It belongs to the class I-like SAM-binding methyltransferase superfamily. TrmB family.

The catalysed reaction is guanosine(46) in tRNA + S-adenosyl-L-methionine = N(7)-methylguanosine(46) in tRNA + S-adenosyl-L-homocysteine. The protein operates within tRNA modification; N(7)-methylguanine-tRNA biosynthesis. Catalyzes the formation of N(7)-methylguanine at position 46 (m7G46) in tRNA. The polypeptide is tRNA (guanine-N(7)-)-methyltransferase (Clostridium perfringens (strain 13 / Type A)).